The sequence spans 251 residues: Pyrroloquinoline-quinone synthase (251 aa).

This sequence belongs to the PqqC family.

The catalysed reaction is 6-(2-amino-2-carboxyethyl)-7,8-dioxo-1,2,3,4,7,8-hexahydroquinoline-2,4-dicarboxylate + 3 O2 = pyrroloquinoline quinone + 2 H2O2 + 2 H2O + H(+). It functions in the pathway cofactor biosynthesis; pyrroloquinoline quinone biosynthesis. Ring cyclization and eight-electron oxidation of 3a-(2-amino-2-carboxyethyl)-4,5-dioxo-4,5,6,7,8,9-hexahydroquinoline-7,9-dicarboxylic-acid to PQQ. The protein is Pyrroloquinoline-quinone synthase of Pseudomonas putida (strain W619).